The primary structure comprises 170 residues: Adenine phosphoribosyltransferase (170 aa).

It belongs to the purine/pyrimidine phosphoribosyltransferase family. Homodimer.

The protein localises to the cytoplasm. It carries out the reaction AMP + diphosphate = 5-phospho-alpha-D-ribose 1-diphosphate + adenine. Its pathway is purine metabolism; AMP biosynthesis via salvage pathway; AMP from adenine: step 1/1. Functionally, catalyzes a salvage reaction resulting in the formation of AMP, that is energically less costly than de novo synthesis. In Cenarchaeum symbiosum (strain A), this protein is Adenine phosphoribosyltransferase.